Consider the following 110-residue polypeptide: Large ribosomal subunit protein P1 (110 aa).

The disordered stretch occupies residues Pro87 to Asp110.

This sequence belongs to the eukaryotic ribosomal protein P1/P2 family. P1 and P2 exist as dimers at the large ribosomal subunit. Post-translationally, phosphorylated.

Functionally, plays an important role in the elongation step of protein synthesis. This Alternaria alternata (Alternaria rot fungus) protein is Large ribosomal subunit protein P1 (ALTA12).